Consider the following 502-residue polypeptide: Neuronal acetylcholine receptor subunit alpha-7 (502 aa).

The signal sequence occupies residues 1 to 23 (MGLRALMLWLLAAAGLVRESLQG). Residues 24–233 (EFQRKLYKEL…VTMRRRTLYY (210 aa)) are Extracellular-facing. Ca(2+)-binding residues include arginine 42 and valine 44. N-linked (GlcNAc...) asparagine glycosylation is found at asparagine 46, asparagine 90, and asparagine 133. The cysteines at positions 150 and 164 are disulfide-linked. Residues threonine 172 and tyrosine 210 each contribute to the Ca(2+) site. A disulfide bridge connects residues cysteine 212 and cysteine 213. Helical transmembrane passes span 234–254 (GLNL…VFLL), 262–282 (ISLG…VAEI), and 295–315 (QYFA…VIVL). Residues 316-469 (QYHHHDPDGG…WKFAASVVDR (154 aa)) are Cytoplasmic-facing. The chain crosses the membrane as a helical span at residues 470-490 (LCLMAFSVFTIICTIGILMSA).

This sequence belongs to the ligand-gated ion channel (TC 1.A.9) family. Acetylcholine receptor (TC 1.A.9.1) subfamily. Alpha-7/CHRNA7 sub-subfamily. Homopentamer. Can also form heteropentamers with CHRNB2, mainly found in basal forebrain cholinergic neurons.

The protein localises to the postsynaptic cell membrane. It is found in the cell membrane. The catalysed reaction is Ca(2+)(in) = Ca(2+)(out). It carries out the reaction K(+)(in) = K(+)(out). It catalyses the reaction Na(+)(in) = Na(+)(out). The enzyme catalyses choline(out) = choline(in). The catalysed reaction is NH4(+)(in) = NH4(+)(out). It carries out the reaction L-arginine(in) = L-arginine(out). It catalyses the reaction guanidine(out) = guanidine(in). Activated by a myriad of ligands such as acetylcholine, cytisine, nicotine, choline and epibatidine. Activity is modulated by positive allosteric modulators (PAMs), such as flavonoids, with a wide range of chemical diversity, pharmacological sensitivity and efficacy. AChR activity is inhibited by the antagonists alpha-conotoxons RgIA, ImI and ImII, small disulfide-constrained peptides from cone snails. Component of neuronal acetylcholine receptors (nAChRs) that function as pentameric, ligand-gated cation channels with high calcium permeability among other activities. nAChRs are excitatory neurotrasnmitter receptors formed by a collection of nAChR subunits known to mediate synaptic transmission in the nervous system and the neuromuscular junction. Each nAchR subunit confers differential attributes to channel properties, including activation, deactivation and desensitization kinetics, pH sensitivity, cation permeability, and binding to allosteric modulators. CHRNA7 is an homooligomeric neuronal acetylcholine receptor abundantly expressed in the central nervous system. Characterized by a fast desensitization and high calcium permeability. Also expressed in non-neuronal cells such as immune cells like lymphocytes, monocytes and macrophages. The polypeptide is Neuronal acetylcholine receptor subunit alpha-7 (CHRNA7) (Gallus gallus (Chicken)).